Reading from the N-terminus, the 418-residue chain is Equilibrative nucleotide transporter 4 (418 aa).

The next 11 helical transmembrane spans lie at 20–40 (MVVC…MLTI), 54–74 (SRVF…ILAY), 85–105 (ILTG…LDLT), 108–128 (GHGG…FGLA), 147–169 (LIQS…RLIT), 186–206 (IFLA…AYVF), 264–284 (HAVN…GFLY), 291–311 (GLGD…DLFG), 326–346 (KALT…YFTA), 353–373 (WMIM…VCIM), and 392–412 (LVVF…LWLI).

This sequence belongs to the SLC29A/ENT transporter (TC 2.A.57) family. Expressed in leaves and at lowe levels in stems and flowers.

It is found in the cell membrane. Functionally, nucleoside transporter that can mediate uptake of adenosine, uridine, guanosine or cytidine when expressed in a heterologous system (yeast). This is Equilibrative nucleotide transporter 4 (ENT4) from Arabidopsis thaliana (Mouse-ear cress).